The following is an 864-amino-acid chain: MARALADLSVNLQVPRVVPSPDSDSDTDLEDPSPRRSAGGLHRSQVIHSGHFMVSSPHSDSLTRRRDQEGPVGLADFGPRSIDPTLTHLFECLSLAYSGKLVSPKWKNFKGLKLLCRDKIRLNNAIWRAWYIQYVQRRKSPVCGFVTPLQGSEADEHRKPEAVILEGNYWKRRIEVVMREYHKWRIYYKKRLRKSSREGDFLAPKQVEGGWPPPERWCEQLFSSVVPVLLGGSEEEPGGRQLLDLDCFLSDISDTLFTMTQPSPSSLQLPPEDAYVGNADMIQPDLTPLQPSLDDFMEISDFFTNYRPPQTPTSSNYIESPSFGPMADSLFSSGILAPEMPSPASSSSSSGMTPHSGNTRLQARNSCSGPLDPNPFLSSEFLLPEDPKTKIPPAPGPTPLLPFPTPVKVHGLEPCTPSPFPTMAPPPSLLPEESLLSARFPFTSAPPAPGVSTLPAPTTFVPTPQPGPGPVPFSVDHLPHGYLEPVFGPHFTVPQGMQPRCKPSSPSPGGQKASPPTLASATASPTATATARDNNPCLTQLLRAAKPEQALEPPTMPGTLLRPPESPQDTVSEIPRARAFFPPIPAPTPPRPPPGPATLAPPRSLVVPKAERLSPPASSGSERRLSGDLNSIQPSGALSVHLSPPQTVLSRGRVDNNKMENRRITHISAEQKRRFNIKLGFDTLHGLVSTLSAQPSLKVSKATTLQKTAEYILMLQQERAAMQEEAQQLRDEIEELNAAINLCQQQLPATGVPITHQRFDQMRDMFDDYVRTRTLHNWKFWVFSILIRPLFESFNGMVSTASLHSLRQTSLAWLEQYCSLPALRPTVLNSLRQLSTSTSILTDPSLVPEQATRAVTEGTLGRPL.

2 disordered regions span residues 15 to 41 (PRVV…AGGL) and 53 to 77 (MVSS…LADF). Ser-20, Ser-23, and Ser-25 each carry phosphoserine. At Thr-27 the chain carries Phosphothreonine. Residue Ser-196 is modified to Phosphoserine. 5 disordered regions span residues 332–397 (SSGI…APGP), 449–468 (PGVS…QPGP), 489–533 (PHFT…TARD), 547–570 (PEQA…PQDT), and 583–602 (PIPA…LAPP). Residues 351-368 (GMTPHSGNTRLQARNSCS) are compositionally biased toward polar residues. Residues 513–531 (ASPPTLASATASPTATATA) show a composition bias toward low complexity. Ser-566 carries the phosphoserine; by AMPK modification. Residues 583-596 (PIPAPTPPRPPPGP) are compositionally biased toward pro residues. Residues Ser-614, Ser-626, and Ser-643 each carry the phosphoserine modification. Residues 661–715 (NRRITHISAEQKRRFNIKLGFDTLHGLVSTLSAQPSLKVSKATTLQKTAEYILML) form the bHLH domain. The segment at 715–736 (LQQERAAMQEEAQQLRDEIEEL) is leucine-zipper.

As to quaternary structure, binds DNA as a heterodimer with TCFL4/MLX. Phosphorylation at Ser-566 by AMPK inactivates the DNA-binding activity. In terms of tissue distribution, expressed in the ventricular and intermediate zones of the developing spinal cord of 12.5 dpc embryos. In later embryos expressed in a variety of tissues.

It is found in the nucleus. Transcriptional repressor. Binds to the canonical and non-canonical E box sequences 5'-CACGTG-3'. The chain is Carbohydrate-responsive element-binding protein (Mlxipl) from Mus musculus (Mouse).